The chain runs to 125 residues: Large ribosomal subunit protein bL12 (125 aa).

Belongs to the bacterial ribosomal protein bL12 family. Homodimer. Part of the ribosomal stalk of the 50S ribosomal subunit. Forms a multimeric L10(L12)X complex, where L10 forms an elongated spine to which 2 to 4 L12 dimers bind in a sequential fashion. Binds GTP-bound translation factors.

Functionally, forms part of the ribosomal stalk which helps the ribosome interact with GTP-bound translation factors. Is thus essential for accurate translation. The protein is Large ribosomal subunit protein bL12 of Campylobacter jejuni subsp. jejuni serotype O:6 (strain 81116 / NCTC 11828).